Reading from the N-terminus, the 1127-residue chain is Elongation factor-like GTPase 1 (1127 aa).

The 256-residue stretch at 17–272 (ANIRNICVLA…LLKTLWGDYY (256 aa)) folds into the tr-type G domain. Residues 26-33 (AHVDHGKT), 92-96 (DSPGH), and 146-149 (NKID) contribute to the GTP site. The segment at 429–496 (KPRPLTQEEM…VASVSRQPVS (68 aa)) is disordered. Composition is skewed to basic and acidic residues over residues 438 to 452 (MAQR…HAEK) and 474 to 484 (SPHEDEPRGDE). Lys528 carries the post-translational modification N6-acetyllysine.

The protein belongs to the TRAFAC class translation factor GTPase superfamily. Classic translation factor GTPase family. In terms of assembly, associates with the 60S ribosomal subunit. Found in a complex consisting of the 60S ribosomal subunit, SBDS and EFL1.

It catalyses the reaction GTP + H2O = GDP + phosphate + H(+). With respect to regulation, GTPase activity is stimulated in the presence of 60S ribosome subunits. Functionally, GTPase involved in the biogenesis of the 60S ribosomal subunit and translational activation of ribosomes. Together with SBDS, triggers the GTP-dependent release of EIF6 from 60S pre-ribosomes in the cytoplasm, thereby activating ribosomes for translation competence by allowing 80S ribosome assembly and facilitating EIF6 recycling to the nucleus, where it is required for 60S rRNA processing and nuclear export. The polypeptide is Elongation factor-like GTPase 1 (Efl1) (Mus musculus (Mouse)).